A 361-amino-acid chain; its full sequence is MKKNLMLIFGGVSFEHEISCKSAYSIYLALLDLNKYNIYPVYIDKCTGVWYLLDSVSDPPKPINTDVLPIVSLLPGFGIFSNNKNLEIDVVFPVVHGRTGEDGAIQGVLKVMDIPCVGAGIIGSAISSNKYFCKLLLKSFDIPLVPFIGFRQHDYFLDKEEIKRNVKEVLGYPVIVKPAVLGSSIGINVAYSENQIESFIKEALKYDLTIVIEKFIEAREIECSIIGNEKMKIFSPGEVVVQDFIFYDYDAKYSVIPGNSIIFNIPAHLETNQLLSIKEYAFLTYKNLELRGMARVDFFVEKKSGTIYLNEINTIPGFTDISMFAKMCSNDGLQFKDLVDNLIDYAFQSYINRKKRIDFEN.

Residues 134-344 (KLLLKSFDIP…FKDLVDNLID (211 aa)) form the ATP-grasp domain. 167 to 222 (KEVLGYPVIVKPAVLGSSIGINVAYSENQIESFIKEALKYDLTIVIEKFIEAREIE) serves as a coordination point for ATP. Mg(2+) contacts are provided by Asp297, Glu311, and Asn313.

The protein belongs to the D-alanine--D-alanine ligase family. Requires Mg(2+) as cofactor. The cofactor is Mn(2+).

It localises to the cytoplasm. It catalyses the reaction 2 D-alanine + ATP = D-alanyl-D-alanine + ADP + phosphate + H(+). It participates in cell wall biogenesis; peptidoglycan biosynthesis. Cell wall formation. In Borreliella burgdorferi (strain ATCC 35210 / DSM 4680 / CIP 102532 / B31) (Borrelia burgdorferi), this protein is D-alanine--D-alanine ligase.